Reading from the N-terminus, the 488-residue chain is Spermatogenesis-associated protein 6 (488 aa).

A signal peptide spans 1–17 (MPKVKALQCALALEIRS). The tract at residues 175–225 (PHGRLQCRTSRSQKKKSKSPERSKYCINTKNYEQPTISSKSHSPSPYTKRR) is disordered. Residues 200-220 (CINTKNYEQPTISSKSHSPSP) show a composition bias toward polar residues. Phosphoserine is present on residues S217 and S219. K248 is covalently cross-linked (Glycyl lysine isopeptide (Lys-Gly) (interchain with G-Cter in SUMO2)). S265, S274, S325, S343, S346, S354, S424, S465, and S487 each carry phosphoserine.

It belongs to the SPATA6 family. Interacts with MYL6. Testis-specific, in spermatocytes.

Its subcellular location is the secreted. The protein localises to the cell projection. It localises to the cilium. The protein resides in the flagellum. Required for formation of the sperm connecting piece during spermiogenesis. Sperm connecting piece is essential for linking the developing flagellum to the head during late spermiogenesis. May be involved in myosin-based microfilament transport through interaction with myosin subunits. This Rattus norvegicus (Rat) protein is Spermatogenesis-associated protein 6 (Spata6).